Consider the following 198-residue polypeptide: HTH-type transcriptional regulator BetI (198 aa).

The HTH tetR-type domain maps to 8–68 (PIRRQQLIEA…ATMRYLIRHL (61 aa)). Positions 31 to 50 (SIAQIAKRAGVSNGIISHYF) form a DNA-binding region, H-T-H motif.

It participates in amine and polyamine biosynthesis; betaine biosynthesis via choline pathway [regulation]. Its function is as follows. Repressor involved in the biosynthesis of the osmoprotectant glycine betaine. It represses transcription of the choline transporter BetT and the genes of BetAB involved in the synthesis of glycine betaine. This Yersinia pseudotuberculosis serotype O:1b (strain IP 31758) protein is HTH-type transcriptional regulator BetI.